A 361-amino-acid chain; its full sequence is Septin-2 (361 aa).

At Tyr17 the chain carries Phosphotyrosine. Residues 34 to 306 (KGFEFTLMVV…ENFRSERLKR (273 aa)) enclose the Septin-type G domain. The tract at residues 44-51 (GESGLGKS) is G1 motif. GTP-binding positions include 44–51 (GESGLGKS), Thr78, Gly104, and 183–191 (KADTLTLKE). The tract at residues 101–104 (DTPG) is G3 motif. The G4 motif stretch occupies residues 182–185 (AKAD). Lys190 carries the N6-acetyllysine modification. Tyr211 carries the post-translational modification Phosphotyrosine. Position 218 is a phosphoserine (Ser218). Residues Gly241 and Arg256 each coordinate GTP. The important for dimerization stretch occupies residues 260–270 (WGVVEVENPEH).

It belongs to the TRAFAC class TrmE-Era-EngA-EngB-Septin-like GTPase superfamily. Septin GTPase family. In terms of assembly, septins polymerize into heterooligomeric protein complexes that form filaments, and associate with cellular membranes, actin filaments and microtubules. GTPase activity is required for filament formation. Septin filaments are assembled from asymmetrical heterotrimers, composed of SEPTIN2, SEPTIN6 and SEPTIN7 that associate head-to-head to form a hexameric unit. Interaction between SEPTIN2 and SEPTIN7 seems indirect. Also interacts with SEPTIN9 and SEPTIN5. Interaction with SEPTIN4 not detected. Component of a septin core octameric complex consisting of SEPTIN12, SEPTIN7, SEPTIN6 and SEPTIN2 or SEPTIN4 in the order 12-7-6-2-2-6-7-12 or 12-7-6-4-4-6-7-12 and located in the sperm annulus. Interacts with MAP4. Interacts with DZIP1L.

Its subcellular location is the cytoplasm. It is found in the cytoskeleton. The protein resides in the spindle. The protein localises to the cleavage furrow. It localises to the midbody. Its subcellular location is the cell cortex. It is found in the cell projection. The protein resides in the cilium membrane. The protein localises to the cilium. It localises to the flagellum. In terms of biological role, filament-forming cytoskeletal GTPase. Forms a filamentous structure with SEPTIN12, SEPTIN6, SEPTIN2 and probably SEPTIN4 at the sperm annulus which is required for the structural integrity and motility of the sperm tail during postmeiotic differentiation. Required for normal organization of the actin cytoskeleton. Plays a role in the biogenesis of polarized columnar-shaped epithelium by maintaining polyglutamylated microtubules, thus facilitating efficient vesicle transport, and by impeding MAP4 binding to tubulin. Required for the progression through mitosis. Forms a scaffold at the midplane of the mitotic splindle required to maintain CENPE localization at kinetochores and consequently chromosome congression. During anaphase, may be required for chromosome segregation and spindle elongation. Plays a role in ciliogenesis and collective cell movements. In cilia, required for the integrity of the diffusion barrier at the base of the primary cilium that prevents diffusion of transmembrane proteins between the cilia and plasma membranes: probably acts by regulating the assembly of the tectonic-like complex (also named B9 complex) by localizing TMEM231 protein. This is Septin-2 from Rattus norvegicus (Rat).